A 98-amino-acid polypeptide reads, in one-letter code: Co-chaperonin GroES 1 (98 aa).

It belongs to the GroES chaperonin family. As to quaternary structure, heptamer of 7 subunits arranged in a ring. Interacts with the chaperonin GroEL.

It is found in the cytoplasm. In terms of biological role, together with the chaperonin GroEL, plays an essential role in assisting protein folding. The GroEL-GroES system forms a nano-cage that allows encapsulation of the non-native substrate proteins and provides a physical environment optimized to promote and accelerate protein folding. GroES binds to the apical surface of the GroEL ring, thereby capping the opening of the GroEL channel. The sequence is that of Co-chaperonin GroES 1 from Rhodopseudomonas palustris (strain ATCC BAA-98 / CGA009).